The primary structure comprises 295 residues: Indole-3-glycerol phosphate synthase (295 aa).

This sequence belongs to the TrpC family.

It catalyses the reaction 1-(2-carboxyphenylamino)-1-deoxy-D-ribulose 5-phosphate + H(+) = (1S,2R)-1-C-(indol-3-yl)glycerol 3-phosphate + CO2 + H2O. The protein operates within amino-acid biosynthesis; L-tryptophan biosynthesis; L-tryptophan from chorismate: step 4/5. The chain is Indole-3-glycerol phosphate synthase from Prochlorococcus marinus (strain AS9601).